Here is a 147-residue protein sequence, read N- to C-terminus: Peptide methionine sulfoxide reductase MsrB 2 (147 aa).

The region spanning 6–129 (TDEEVSKLTP…NSAALRFIPR (124 aa)) is the MsrB domain. Cys118 functions as the Nucleophile in the catalytic mechanism.

The protein belongs to the MsrB Met sulfoxide reductase family.

The enzyme catalyses L-methionyl-[protein] + [thioredoxin]-disulfide + H2O = L-methionyl-(R)-S-oxide-[protein] + [thioredoxin]-dithiol. The sequence is that of Peptide methionine sulfoxide reductase MsrB 2 (msrB2) from Rhizobium meliloti (strain 1021) (Ensifer meliloti).